Consider the following 197-residue polypeptide: Probable nicotinate-nucleotide adenylyltransferase (197 aa).

The protein belongs to the NadD family.

It catalyses the reaction nicotinate beta-D-ribonucleotide + ATP + H(+) = deamido-NAD(+) + diphosphate. It functions in the pathway cofactor biosynthesis; NAD(+) biosynthesis; deamido-NAD(+) from nicotinate D-ribonucleotide: step 1/1. In terms of biological role, catalyzes the reversible adenylation of nicotinate mononucleotide (NaMN) to nicotinic acid adenine dinucleotide (NaAD). This Bordetella parapertussis (strain 12822 / ATCC BAA-587 / NCTC 13253) protein is Probable nicotinate-nucleotide adenylyltransferase.